The primary structure comprises 601 residues: Adenine deaminase (601 aa).

This sequence belongs to the metallo-dependent hydrolases superfamily. Adenine deaminase family. The cofactor is Mn(2+).

The enzyme catalyses adenine + H2O + H(+) = hypoxanthine + NH4(+). The chain is Adenine deaminase from Ruegeria sp. (strain TM1040) (Silicibacter sp.).